Consider the following 120-residue polypeptide: Large ribosomal subunit protein bL12 (120 aa).

Belongs to the bacterial ribosomal protein bL12 family. Homodimer. Part of the ribosomal stalk of the 50S ribosomal subunit. Forms a multimeric L10(L12)X complex, where L10 forms an elongated spine to which 2 to 4 L12 dimers bind in a sequential fashion. Binds GTP-bound translation factors.

Forms part of the ribosomal stalk which helps the ribosome interact with GTP-bound translation factors. Is thus essential for accurate translation. The chain is Large ribosomal subunit protein bL12 from Lactobacillus acidophilus (strain ATCC 700396 / NCK56 / N2 / NCFM).